The chain runs to 555 residues: Putative protein NRT1/ PTR FAMILY 2.14 (555 aa).

A run of 12 helical transmembrane segments spans residues 62 to 82 (VTLINTWSALTNFAPIIGAFI), 93 to 113 (IVFGSIAELLGMLVLTFTSLV), 135 to 155 (YSQLYVLLSGLFLLSVGTGGI), 181 to 201 (FFSWYYTTHTIVQLVSMTLVL), 209 to 229 (WGIGFAIPTVLNFFALLLLFV), 234 to 254 (YVFVKPEGSVFSGVFKVLVAA), 319 to 339 (IKSIISIIPIFASSIIGFLAM), 363 to 383 (LIPPASITVISLLNIGIWLPF), 405 to 425 (LQKVGIGNIFSISTMLISGIV), 441 to 461 (VFWLTPQQVLMGFYQVFTIVG), 480 to 500 (SLLYLGLSLASYLSSAMVSIV), and 523 to 543 (CFYYFIAALSTLNFIFFFWCA).

This sequence belongs to the major facilitator superfamily. Proton-dependent oligopeptide transporter (POT/PTR) (TC 2.A.17) family. In terms of tissue distribution, not detected.

Its subcellular location is the membrane. The sequence is that of Putative protein NRT1/ PTR FAMILY 2.14 (NPF2.14) from Arabidopsis thaliana (Mouse-ear cress).